Consider the following 307-residue polypeptide: Holliday junction branch migration complex subunit RuvB (307 aa).

The interval 1–167 (MKLQIKPPNN…FGMILNIDYY (167 aa)) is large ATPase domain (RuvB-L). ATP-binding positions include Ile5, Gly48, Lys51, Thr52, Thr53, 114–116 (DDF), Arg157, Tyr167, and Arg204. Thr52 is a Mg(2+) binding site. The segment at 168–233 (SNQEIERIVS…DLAALFKSLM (66 aa)) is small ATPAse domain (RuvB-S). The interval 236 to 307 (KNGLQSIDVQ…RTGRNYLTSC (72 aa)) is head domain (RuvB-H). Residues Lys289 and Arg294 each contribute to the DNA site.

Belongs to the RuvB family. Homohexamer. Forms an RuvA(8)-RuvB(12)-Holliday junction (HJ) complex. HJ DNA is sandwiched between 2 RuvA tetramers; dsDNA enters through RuvA and exits via RuvB. An RuvB hexamer assembles on each DNA strand where it exits the tetramer. Each RuvB hexamer is contacted by two RuvA subunits (via domain III) on 2 adjacent RuvB subunits; this complex drives branch migration. In the full resolvosome a probable DNA-RuvA(4)-RuvB(12)-RuvC(2) complex forms which resolves the HJ.

The protein resides in the cytoplasm. The catalysed reaction is ATP + H2O = ADP + phosphate + H(+). In terms of biological role, the RuvA-RuvB-RuvC complex processes Holliday junction (HJ) DNA during genetic recombination and DNA repair, while the RuvA-RuvB complex plays an important role in the rescue of blocked DNA replication forks via replication fork reversal (RFR). RuvA specifically binds to HJ cruciform DNA, conferring on it an open structure. The RuvB hexamer acts as an ATP-dependent pump, pulling dsDNA into and through the RuvAB complex. RuvB forms 2 homohexamers on either side of HJ DNA bound by 1 or 2 RuvA tetramers; 4 subunits per hexamer contact DNA at a time. Coordinated motions by a converter formed by DNA-disengaged RuvB subunits stimulates ATP hydrolysis and nucleotide exchange. Immobilization of the converter enables RuvB to convert the ATP-contained energy into a lever motion, pulling 2 nucleotides of DNA out of the RuvA tetramer per ATP hydrolyzed, thus driving DNA branch migration. The RuvB motors rotate together with the DNA substrate, which together with the progressing nucleotide cycle form the mechanistic basis for DNA recombination by continuous HJ branch migration. Branch migration allows RuvC to scan DNA until it finds its consensus sequence, where it cleaves and resolves cruciform DNA. This chain is Holliday junction branch migration complex subunit RuvB, found in Mycoplasma pneumoniae (strain ATCC 29342 / M129 / Subtype 1) (Mycoplasmoides pneumoniae).